The following is a 232-amino-acid chain: Putative caffeoyl-CoA O-methyltransferase At1g67980 (232 aa).

K8 is a substrate binding site. S-adenosyl-L-methionine-binding positions include V52, E74, G76–V77, S82, and D100. D149 contacts substrate. D149 lines the a divalent metal cation pocket. D151 contacts S-adenosyl-L-methionine. D175 and N176 together coordinate a divalent metal cation.

Belongs to the class I-like SAM-binding methyltransferase superfamily. Cation-dependent O-methyltransferase family. CCoAMT subfamily. A divalent metal cation is required as a cofactor.

The catalysed reaction is (E)-caffeoyl-CoA + S-adenosyl-L-methionine = (E)-feruloyl-CoA + S-adenosyl-L-homocysteine + H(+). It functions in the pathway aromatic compound metabolism; phenylpropanoid biosynthesis. Methylates caffeoyl-CoA to feruloyl-CoA and 5-hydroxyferuloyl-CoA to sinapoyl-CoA. Plays a role in the synthesis of feruloylated polysaccharides. Involved in the reinforcement of the plant cell wall. Also involved in the responding to wounding or pathogen challenge by the increased formation of cell wall-bound ferulic acid polymers. This is Putative caffeoyl-CoA O-methyltransferase At1g67980 from Arabidopsis thaliana (Mouse-ear cress).